Reading from the N-terminus, the 137-residue chain is MGAFPSPPPWGWSTGFITTPLTTGRLPSQHLDPALPKLFWFTPTLPTCPTVAKQFWDTKRTSPDGNLKVANLPSFAISFATAPAALANCPPLPRVISMLCMAVPKGISVEVDSSFFSKNPFPNCTSFFQSIRLSRCI.

The protein belongs to the ycf72 family.

It localises to the plastid. It is found in the chloroplast. This is an uncharacterized protein from Zea mays (Maize).